The primary structure comprises 89 residues: Cell division topological specificity factor (89 aa).

The protein belongs to the MinE family.

Prevents the cell division inhibition by proteins MinC and MinD at internal division sites while permitting inhibition at polar sites. This ensures cell division at the proper site by restricting the formation of a division septum at the midpoint of the long axis of the cell. The polypeptide is Cell division topological specificity factor (Photorhabdus laumondii subsp. laumondii (strain DSM 15139 / CIP 105565 / TT01) (Photorhabdus luminescens subsp. laumondii)).